A 697-amino-acid chain; its full sequence is SPX domain-containing membrane protein At1g63010 (697 aa).

Residues 2–145 enclose the SPX domain; the sequence is VAFGKYLQRK…GYRFADYYVK (144 aa). Transmembrane regions (helical) follow at residues 247–267, 278–298, 315–335, 337–356, 375–395, and 411–431; these read FNSL…TYII, LGAA…AQVF, LVFS…AYDA, SIAL…ARAV, AGFV…AGLL, and LPGW…CISF. Positions 439-459 are disordered; sequence EDGEKNNRNETTSDRVESSRV. 5 helical membrane passes run 513 to 533, 544 to 564, 576 to 596, 604 to 624, and 670 to 690; these read LLIY…SSVI, SVAI…ILVG, ILLT…NLFV, VISG…NLSL, and LLNA…VATC.

The protein belongs to the major facilitator superfamily.

It localises to the membrane. This is SPX domain-containing membrane protein At1g63010 from Arabidopsis thaliana (Mouse-ear cress).